Consider the following 473-residue polypeptide: tRNA-2-methylthio-N(6)-dimethylallyladenosine synthase (473 aa).

An MTTase N-terminal domain is found at 5–125 (RKLHIKSFGC…LPQLLAEAAR (121 aa)). Positions 14, 50, 88, 166, 170, and 173 each coordinate [4Fe-4S] cluster. Residues 152 to 384 (RARGISAFVT…QELIDSQQAA (233 aa)) form the Radical SAM core domain. Residues 387–449 (AAVIGTTVEV…RYSLIGELAA (63 aa)) enclose the TRAM domain. A disordered region spans residues 452–473 (QHSGFATRSEDSPQSLPITTGA).

It belongs to the methylthiotransferase family. MiaB subfamily. Monomer. The cofactor is [4Fe-4S] cluster.

It is found in the cytoplasm. It carries out the reaction N(6)-dimethylallyladenosine(37) in tRNA + (sulfur carrier)-SH + AH2 + 2 S-adenosyl-L-methionine = 2-methylsulfanyl-N(6)-dimethylallyladenosine(37) in tRNA + (sulfur carrier)-H + 5'-deoxyadenosine + L-methionine + A + S-adenosyl-L-homocysteine + 2 H(+). In terms of biological role, catalyzes the methylthiolation of N6-(dimethylallyl)adenosine (i(6)A), leading to the formation of 2-methylthio-N6-(dimethylallyl)adenosine (ms(2)i(6)A) at position 37 in tRNAs that read codons beginning with uridine. This is tRNA-2-methylthio-N(6)-dimethylallyladenosine synthase from Rhodopseudomonas palustris (strain BisB18).